Reading from the N-terminus, the 327-residue chain is MAKPAKRVAVTGAAGQIGYSLLFRIANGDMLGKDQPVILQLLDLPQAQAAVKGVVMELEDCAFPLLAGVVVTDDPKVAFKDADVALLVGARPRSKGMERKDLLSANAEIFTVQGKALNEVASRDVKVLVVGNPANTNAYIAMKSAPDLPKKNFTAMLRLDHNRALSQLAAKSGKPVSSIEKLVVWGNHSPTMYPDFRVATAEGQDLTKLINDEEWNRNTFIPTVGKRGAAIIEARGLSSAASAANAAIDHVRDWVLGTNGKWVTMGIPSDGSYGIPEDIVYGVAVTCENGEYKRVEGLQIDAFSREKMDNTLNELLEERDGVQHLLG.

NAD(+) is bound at residue 12 to 18; that stretch reads GAAGQIG. Substrate is bound by residues Arg-93 and Arg-99. NAD(+) is bound by residues Asn-106, Gln-113, and 130–132; that span reads VGN. Substrate is bound by residues Asn-132 and Arg-163. The active-site Proton acceptor is His-188.

Belongs to the LDH/MDH superfamily. MDH type 2 family.

It carries out the reaction (S)-malate + NAD(+) = oxaloacetate + NADH + H(+). Catalyzes the reversible oxidation of malate to oxaloacetate. The polypeptide is Malate dehydrogenase (Paraburkholderia phymatum (strain DSM 17167 / CIP 108236 / LMG 21445 / STM815) (Burkholderia phymatum)).